The sequence spans 484 residues: Ornithine decarboxylase (484 aa).

At Lys-114 the chain carries N6-(pyridoxal phosphate)lysine. Pyridoxal 5'-phosphate-binding positions include Ser-245, Gly-282, and Glu-315–Arg-318. Residue Phe-381 to Asp-382 coordinates substrate. Cys-422 (proton donor; shared with dimeric partner) is an active-site residue. Asp-423 serves as a coordination point for substrate. A pyridoxal 5'-phosphate-binding site is contributed by Tyr-452.

Belongs to the Orn/Lys/Arg decarboxylase class-II family. As to quaternary structure, homodimer. Only the dimer is catalytically active, as the active sites are constructed of residues from both monomers. Requires pyridoxal 5'-phosphate as cofactor.

It is found in the cytoplasm. The enzyme catalyses L-ornithine + H(+) = putrescine + CO2. It participates in amine and polyamine biosynthesis; putrescine biosynthesis via L-ornithine pathway; putrescine from L-ornithine: step 1/1. With respect to regulation, inhibited by antizyme (AZ) OAZ1 in response to polyamine levels. AZ inhibits the assembly of the functional homodimer by binding to ODC monomers and targeting them for ubiquitin-independent proteolytic destruction by the 26S proteasome. Its function is as follows. Catalyzes the first and rate-limiting step of polyamine biosynthesis that converts ornithine into putrescine, which is the precursor for the polyamines, spermidine and spermine. Polyamines are essential for cell proliferation and are implicated in cellular processes, ranging from DNA replication to apoptosis. The sequence is that of Ornithine decarboxylase (spe-1) from Neurospora crassa (strain ATCC 24698 / 74-OR23-1A / CBS 708.71 / DSM 1257 / FGSC 987).